The sequence spans 237 residues: MSTSESSNNGSQPGNQDTGYIPGDDTWTQWRNIFSILAGRMTDEGKEQFRVARDIRNEVADCKRCEDQRDYLLQFSPIIRFMSDSIRQLGGDLHSHNIYCRRCTNRKAGGFDPDYGILICANEMKDQGHLEDTMAHEMVHAYDHLRFKVDWMNNLRHAACTEIRASSLSGECRWAREFFRRGQWKFTQQHQECVRRRAILSVRARPGCKDEAHAEKVVNEVWDSCFRDTRPFDEIYR.

Positions 1-18 (MSTSESSNNGSQPGNQDT) are enriched in polar residues. Residues 1–24 (MSTSESSNNGSQPGNQDTGYIPGD) form a disordered region. Position 136 (His136) interacts with a divalent metal cation. Glu137 is a catalytic residue. His140 is a binding site for a divalent metal cation.

The protein belongs to the peptidase M76 family.

Its subcellular location is the mitochondrion inner membrane. Its function is as follows. Has a dual role in the assembly of mitochondrial ATPase. Acts as a protease that removes N-terminal residues of mitochondrial ATPase CF(0) subunit 6 at the intermembrane space side. Also involved in the correct assembly of the membrane-embedded ATPase CF(0) particle, probably mediating association of subunit 6 with the subunit 9 ring. This chain is Mitochondrial inner membrane protease atp23 (atp23), found in Aspergillus niger (strain ATCC MYA-4892 / CBS 513.88 / FGSC A1513).